The primary structure comprises 165 residues: Type II secretion system protein M (165 aa).

Residues 1-22 (MKELLAPVQAWWRSVTPREQKM) lie on the Cytoplasmic side of the membrane. A helical membrane pass occupies residues 23-43 (VMGMGALTVLAIAYWGIWQPL). Residues 44–165 (SERTAQAQAR…VKRLQLKRGG (122 aa)) are Periplasmic-facing.

The protein belongs to the GSP M family. In terms of assembly, type II secretion system is composed of four main components: the outer membrane complex, the inner membrane complex, the cytoplasmic secretion ATPase and the periplasm-spanning pseudopilus. Forms homodimers. Interacts with EpsL/GspL. Interacts with EpsE/GspE. Interacts with EpsF/GspF.

The protein resides in the cell inner membrane. Its function is as follows. Inner membrane component of the type II secretion system required for the energy-dependent secretion of extracellular factors such as proteases and toxins from the periplasm. Plays a role in the complex assembly and recruits EpsL resulting in a stable complex in the inner membrane. Provides thus a link between the energy-providing EpsE protein in the cytoplasm and the rest of the T2SS machinery. The protein is Type II secretion system protein M (epsM) of Vibrio cholerae serotype O1 (strain ATCC 39315 / El Tor Inaba N16961).